The following is a 162-amino-acid chain: Probable chorismate pyruvate-lyase (162 aa).

Substrate is bound by residues arginine 54, leucine 92, and glutamate 149.

It belongs to the UbiC family.

The protein resides in the cytoplasm. It catalyses the reaction chorismate = 4-hydroxybenzoate + pyruvate. It functions in the pathway cofactor biosynthesis; ubiquinone biosynthesis. In terms of biological role, removes the pyruvyl group from chorismate, with concomitant aromatization of the ring, to provide 4-hydroxybenzoate (4HB) for the ubiquinone pathway. The polypeptide is Probable chorismate pyruvate-lyase (Methylococcus capsulatus (strain ATCC 33009 / NCIMB 11132 / Bath)).